A 2541-amino-acid polypeptide reads, in one-letter code: MVALSLKISIGNVVKTMQFEPSTMVYDACRIIRERIPEAPAGPPSDFGLFLSDDDPKKGIWLEAGKALDYYMLRNGDTMEYRKKQRPLKIRMLDGTVKTIMVDDSKTVTDMLMTICARIGITNHDEYSLVRELMEEKKEEITGTLRKDKTLLRDEKKMEKLKQKLHTDDELNWLDHGRTLREQGVEEHETLLLRRKFFYSDQNVDSRDPVQLNLLYVQARDDILNGSHPVSFDKACEFAGFQCQIQFGPHNEQKHKAGFLDLKDFLPKEYVKQKGERKIFQAHKNCGQMSEIEAKVRYVKLARSLKTYGVSFFLVKEKMKGKNKLVPRLLGITKECVMRVDEKTKEVIQEWNLTNIKRWAASPKSFTLDFGDYQDGYYSVQTTEGEQIAQLIAGYIDIILKKKKSKDHFGLEGDEESTMLEDSVSPKKSTVLQQQYNRVGKVEHGSVALPAIMRSGASGPENFQVGSMPPAQQQITSGQMHRGHMPPLTSAQQALTGTINSSMQAVQAAQATLDDFDTLPPLGQDAASKAWRKNKMDESKHEIHSQVDAITAGTASVVNLTAGDPAETDYTAVGCAVTTISSNLTEMSRGVKLLAALLEDEGGSGRPLLQAAKGLAGAVSELLRSAQPASAEPRQNLLQAAGNVGQASGELLQQIGESDTDPHFQDALMQLAKAVASAAAALVLKAKSVAQRTEDSGLQTQVIAAATQCALSTSQLVACTKVVAPTISSPVCQEQLVEAGRLVAKAVEGCVSASQAATEDGQLLRGVGAAATAVTQALNELLQHVKAHATGAGPAGRYDQATDTILTVTENIFSSMGDAGEMVRQARILAQATSDLVNAIKADAEGESDLENSRKLLSAAKILADATAKMVEAAKGAAAHPDSEEQQQRLREAAEGLRMATNAAAQNAIKKKLVQRLEHAAKQAAASATQTIAAAQHAASTPKASAGPQPLLVQSCKAVAEQIPLLVQGVRGSQAQPDSPSAQLALIAASQSFLQPGGKMVAAAKASVPTIQDQASAMQLSQCAKNLGTALAELRTAAQKAQEACGPLEMDSALSVVQNLEKDLQEVKAAARDGKLKPLPGETMEKCTQDLGNSTKAVSSAIAQLLGEVAQGNENYAGIAARDVAGGLRSLAQAARGVAALTSDPAVQAIVLDTASDVLDKASSLIEEAKKAAGHPGDPESQQRLAQVAKAVTQALNRCVSCLPGQRDVDNALRAVGDASKRLLSDSLPPSTGTFQEAQSRLNEAAAGLNQAATELVQASRGTPQDLARASGRFGQDFSTFLEAGVEMAGQAPSQEDRAQVVSNLKGISMSSSKLLLAAKALSTDPAAPNLKSQLAAAARAVTDSINQLITMCTQQAPGQKECDNALRELETVRELLENPVQPINDMSYFGCLDSVMENSKVLGEAMTGISQNAKNGNLPEFGDAISTASKALCGFTEAAAQAAYLVGVSDPNSQAGQQGLVEPTQFARANQAIQMACQSLGEPGCTQAQVLSAATIVAKHTSALCNSCRLASARTTNPTAKRQFVQSAKEVANSTANLVKTIKALDGAFTEENRAQCRAATAPLLEAVDNLSAFASNPEFSSIPAQISPEGRAAMEPIVISAKTMLESAGGLIQTARALAVNPRDPPSWSVLAGHSRTVSDSIKKLITSMRDKAPGQLECETAIAALNSCLRDLDQASLAAVSQQLAPREGISQEALHTQMLTAVQEISHLIEPLANAARAEASQLGHKVSQMAQYFEPLTLAAVGAASKTLSHPQQMALLDQTKTLAESALQLLYTAKEAGGNPKQAAHTQEALEEAVQMMTEAVEDLTTTLNEAASAAGVVGGMVDSITQAINQLDEGPMGEPEGSFVDYQTTMVRTAKAIAVTVQEMVTKSNTSPEELGPLANQLTSDYGRLASEAKPAAVAAENEEIGSHIKHRVQELGHGCAALVTKAGALQCSPSDAYTKKELIECARRVSEKVSHVLAALQAGNRGTQACITAASAVSGIIADLDTTIMFATAGTLNREGTETFADHREGILKTAKVLVEDTKVLVQNAAGSQEKLAQAAQSSVATITRLADVVKLGAASLGAEDPETQVVLINAVKDVAKALGDLISATKAAAGKVGDDPAVWQLKNSAKVMVTNVTSLLKTVKAVEDEATKGTRALEATTEHIRQELAVFCSPEPPAKTSTPEDFIRMTKGITMATAKAVAAGNSCRQEDVIATANLSRRAIADMLRACKEAAYHPEVAPDVRLRALHYGRECANGYLELLDHVLLTLQKPSPELKQQLTGHSKRVAGSVTELIQAAEAMKGTEWVDPEDPTVIAENELLGAAAAIEAAAKKLEQLKPRAKPKEADESLNFEEQILEAAKSIAAATSALVKAASAAQRELVAQGKVGAIPANALDDGQWSQGLISAARMVAAATNNLCEAANAAVQGHASQEKLISSAKQVAASTAQLLVACKVKADQDSEAMKRLQAAGNAVKRASDNLVKAAQKAAAFEEQENETVVVKEKMVGGIAQIIAAQEEMLRKERELEEARKKLAQIRQQQYKFLPSELRDEH.

Residues 86–403 enclose the FERM domain; sequence RPLKIRMLDG…GYIDIILKKK (318 aa). At threonine 167 the chain carries Phosphothreonine. The interval 280–435 is interaction with LAYN; sequence FQAHKNCGQM…PKKSTVLQQQ (156 aa). 5 positions are modified to phosphoserine: serine 405, serine 425, serine 446, serine 620, and serine 729. The interval 482–655 is helical bundle R1; that stretch reads RGHMPPLTSA…QASGELLQQI (174 aa). Residues 656-786 form a helical bundle R2 region; the sequence is GESDTDPHFQ…ALNELLQHVK (131 aa). A helical bundle R3 region spans residues 787 to 911; sequence AHATGAGPAG…NAAAQNAIKK (125 aa). The tract at residues 913 to 1044 is helical bundle R4; it reads LVQRLEHAAK…RTAAQKAQEA (132 aa). Serine 1021 carries the phosphoserine modification. Positions 1046–1206 are helical bundle R5; the sequence is GPLEMDSALS…NRCVSCLPGQ (161 aa). The residue at position 1116 (tyrosine 1116) is a Phosphotyrosine. Threonine 1142 carries the post-translational modification Phosphothreonine. Phosphoserine occurs at positions 1201 and 1225. The interval 1207 to 1357 is helical bundle R6; that stretch reads RDVDNALRAV…QLITMCTQQA (151 aa). Threonine 1263 is subject to Phosphothreonine. Serine 1323 carries the phosphoserine modification. The interaction with SYNM stretch occupies residues 1327–1948; the sequence is AAPNLKSQLA…CSPSDAYTKK (622 aa). Residues 1358–1453 form a helical bundle R7A region; sequence PGQKECDNAL…AYLVGVSDPN (96 aa). The interval 1359–1659 is interaction with VCL and F-actin; it reads GQKECDNALR…SMRDKAPGQL (301 aa). The helical bundle R8 stretch occupies residues 1461–1580; that stretch reads LVEPTQFARA…NLSAFASNPE (120 aa). Lysine 1544 carries the post-translational modification N6-acetyllysine. Residues 1581–1653 are helical bundle R7B; that stretch reads FSSIPAQISP…IKKLITSMRD (73 aa). The tract at residues 1655 to 1822 is helical bundle R9; the sequence is APGQLECETA…TLNEAASAAG (168 aa). The interval 1823–1973 is helical bundle R10; that stretch reads VVGGMVDSIT…VLAALQAGNR (151 aa). Residue serine 1849 is modified to Phosphoserine. Threonine 1855 is modified (phosphothreonine). Serine 1878 carries the post-translational modification Phosphoserine. The helical bundle R11 stretch occupies residues 1974 to 2140; the sequence is GTQACITAAS…TVKAVEDEAT (167 aa). N6-acetyllysine is present on lysine 2031. Serine 2040 is subject to Phosphoserine. N6-acetyllysine is present on lysine 2115. Positions 2141–2294 are helical bundle R12; the sequence is KGTRALEATT…QAAEAMKGTE (154 aa). The I/LWEQ domain occupies 2293–2533; the sequence is TEWVDPEDPT…QIRQQQYKFL (241 aa). The tract at residues 2300 to 2482 is helical bundle R13; the sequence is DPTVIAENEL…AAQKAAAFEE (183 aa).

As to quaternary structure, part of a complex composed of THSD1, PTK2/FAK1, TLN1 and VCL. Interacts with THSD1; this promotes interaction with PTK2/FAK1 and VCL. Binds with high affinity to VCL and with low affinity to integrins. Interacts with APBB1IP; this inhibits VCL binding. Interacts with PTK2/FAK1. Interacts with PIP5K1C and NRAP. Interacts with LAYN. Interacts with SYNM. Interacts with ITGB1; the interaction is prevented by competitive binding of ITGB1BP1. Interacts with SVEP1. Interacts (via R7 domain) with KANK1 or KANK2 (via KN motif); this interaction likely initiates the assembly of cortical microtubule stabilization complexes (CMSCs) at the vicinity of focal adhesions. In terms of assembly, interacts with VCL; shows reduced VCL binding compared to isoform 2. Interacts with APBB1IP; shows similar level of binding compared to isoform 2. Interacts with VCL; shows enhanced VCL binding compared to isoform 1. Interacts with APBB1IP; shows similar level of binding compared to isoform 1. As to quaternary structure, (Microbial infection) Interacts with human cytomegalovirus protein UL135. Expressed at low to non-detectable levels in many tissues but highly expressed in skin and pancreas with other tissues including kidney cortex, endocervix, testis, pituitary, liver, and spleen also showing robust expression.

The protein localises to the cell projection. The protein resides in the ruffle membrane. Its subcellular location is the cytoplasm. It localises to the cytoskeleton. It is found in the cell surface. The protein localises to the cell junction. The protein resides in the focal adhesion. Functionally, high molecular weight cytoskeletal protein concentrated at regions of cell-matrix and cell-cell contacts. Involved in connections of major cytoskeletal structures to the plasma membrane. With KANK1 co-organize the assembly of cortical microtubule stabilizing complexes (CMSCs) positioned to control microtubule-actin crosstalk at focal adhesions (FAs) rims. In Homo sapiens (Human), this protein is Talin-1 (TLN1).